A 432-amino-acid polypeptide reads, in one-letter code: Amino-acid acetyltransferase (432 aa).

The region spanning Glu286–Ser425 is the N-acetyltransferase domain.

This sequence belongs to the acetyltransferase family. ArgA subfamily.

It is found in the cytoplasm. The catalysed reaction is L-glutamate + acetyl-CoA = N-acetyl-L-glutamate + CoA + H(+). It participates in amino-acid biosynthesis; L-arginine biosynthesis; N(2)-acetyl-L-ornithine from L-glutamate: step 1/4. In Pseudomonas aeruginosa (strain LESB58), this protein is Amino-acid acetyltransferase.